The primary structure comprises 101 residues: UPF0473 protein str1961 (101 aa).

It belongs to the UPF0473 family.

The sequence is that of UPF0473 protein str1961 from Streptococcus thermophilus (strain CNRZ 1066).